Reading from the N-terminus, the 344-residue chain is Phenylalanine--tRNA ligase alpha subunit (344 aa).

Residue Glu-257 participates in Mg(2+) binding.

This sequence belongs to the class-II aminoacyl-tRNA synthetase family. Phe-tRNA synthetase alpha subunit type 1 subfamily. As to quaternary structure, tetramer of two alpha and two beta subunits. Mg(2+) is required as a cofactor.

The protein localises to the cytoplasm. The enzyme catalyses tRNA(Phe) + L-phenylalanine + ATP = L-phenylalanyl-tRNA(Phe) + AMP + diphosphate + H(+). The polypeptide is Phenylalanine--tRNA ligase alpha subunit (Chlorobium chlorochromatii (strain CaD3)).